The following is a 152-amino-acid chain: 3-hydroxyacyl-[acyl-carrier-protein] dehydratase FabZ (152 aa).

Histidine 58 is a catalytic residue.

The protein belongs to the thioester dehydratase family. FabZ subfamily.

It localises to the cytoplasm. It carries out the reaction a (3R)-hydroxyacyl-[ACP] = a (2E)-enoyl-[ACP] + H2O. Functionally, involved in unsaturated fatty acids biosynthesis. Catalyzes the dehydration of short chain beta-hydroxyacyl-ACPs and long chain saturated and unsaturated beta-hydroxyacyl-ACPs. The sequence is that of 3-hydroxyacyl-[acyl-carrier-protein] dehydratase FabZ from Prochlorococcus marinus (strain MIT 9215).